Reading from the N-terminus, the 239-residue chain is Ribosomal RNA small subunit methyltransferase G (239 aa).

Residues glycine 78, phenylalanine 83, 129 to 130 (AE), and arginine 148 each bind S-adenosyl-L-methionine.

It belongs to the methyltransferase superfamily. RNA methyltransferase RsmG family.

It localises to the cytoplasm. Functionally, specifically methylates the N7 position of a guanine in 16S rRNA. The polypeptide is Ribosomal RNA small subunit methyltransferase G (Clostridium botulinum (strain 657 / Type Ba4)).